A 237-amino-acid chain; its full sequence is Phosphoserine phosphatase (237 aa).

The active-site Nucleophile is the Asp-39. Asp-39 and Glu-41 together coordinate Mg(2+). The active-site Proton donor is the Glu-41. Residues Glu-47, Arg-78, 122–123 (SD), and Lys-165 contribute to the substrate site. Asp-184 contributes to the Mg(2+) binding site. Residue Asn-187 coordinates substrate.

It belongs to the thrH family. The cofactor is Mg(2+).

The enzyme catalyses O-phospho-L-serine + H2O = L-serine + phosphate. It catalyses the reaction O-phospho-D-serine + H2O = D-serine + phosphate. It functions in the pathway amino-acid biosynthesis; L-serine biosynthesis; L-serine from 3-phospho-D-glycerate: step 3/3. Its function is as follows. Phosphoserine phosphatase that mediates dephosphorylation of phosphoserine in the serine biosynthesis pathway. Also able to dephosphorylate phospho-threonine. This Pseudomonas syringae pv. tomato (strain ATCC BAA-871 / DC3000) protein is Phosphoserine phosphatase.